The chain runs to 235 residues: Uridylate kinase (235 aa).

Residue 8-11 coordinates ATP; it reads KLSG. UMP is bound at residue Gly-49. 2 residues coordinate ATP: Gly-50 and Arg-54. 131-138 is a binding site for UMP; sequence TGNPYFST. ATP contacts are provided by Asn-159, Tyr-165, and Asp-168.

This sequence belongs to the UMP kinase family. Homohexamer.

Its subcellular location is the cytoplasm. The catalysed reaction is UMP + ATP = UDP + ADP. It functions in the pathway pyrimidine metabolism; CTP biosynthesis via de novo pathway; UDP from UMP (UMPK route): step 1/1. With respect to regulation, inhibited by UTP. Its function is as follows. Catalyzes the reversible phosphorylation of UMP to UDP. The sequence is that of Uridylate kinase from Mycoplasma pneumoniae (strain ATCC 29342 / M129 / Subtype 1) (Mycoplasmoides pneumoniae).